A 405-amino-acid polypeptide reads, in one-letter code: S-adenosylmethionine synthase (405 aa).

Histidine 22 contacts ATP. Aspartate 24 is a binding site for Mg(2+). Glutamate 50 lines the K(+) pocket. L-methionine contacts are provided by glutamate 63 and glutamine 107. Positions glutamine 107 to arginine 117 are flexible loop. ATP is bound by residues aspartate 184 to lysine 186, arginine 250 to phenylalanine 251, aspartate 259, arginine 265 to lysine 266, alanine 282, and lysine 286. Position 259 (aspartate 259) interacts with L-methionine. An L-methionine-binding site is contributed by lysine 290.

Belongs to the AdoMet synthase family. As to quaternary structure, homotetramer; dimer of dimers. It depends on Mg(2+) as a cofactor. K(+) serves as cofactor.

It is found in the cytoplasm. The enzyme catalyses L-methionine + ATP + H2O = S-adenosyl-L-methionine + phosphate + diphosphate. It participates in amino-acid biosynthesis; S-adenosyl-L-methionine biosynthesis; S-adenosyl-L-methionine from L-methionine: step 1/1. Its function is as follows. Catalyzes the formation of S-adenosylmethionine (AdoMet) from methionine and ATP. The overall synthetic reaction is composed of two sequential steps, AdoMet formation and the subsequent tripolyphosphate hydrolysis which occurs prior to release of AdoMet from the enzyme. The protein is S-adenosylmethionine synthase of Roseiflexus sp. (strain RS-1).